A 206-amino-acid polypeptide reads, in one-letter code: Regulatory protein CysR (206 aa).

Residues 120–196 (RRAEAKLASL…DRALIVRYPE (77 aa)) form the HTH crp-type domain. Residues 156–175 (HQVIAELSGSTRVTTTRLLG) constitute a DNA-binding region (H-T-H motif).

Its subcellular location is the cytoplasm. Functionally, probably regulates the expression of genes from the sulfate permease complex. The protein is Regulatory protein CysR (cysR) of Synechococcus elongatus (strain ATCC 33912 / PCC 7942 / FACHB-805) (Anacystis nidulans R2).